A 527-amino-acid polypeptide reads, in one-letter code: MTERRDNVSHAPDAIEGPNDGAHAEDTSPGFFSLENLGVAQVQVVGGTLNGYVIGYVAVYLLLYLTATECKFTTEGACGGRKIYGCKWSGTTCKFENPKCSEGSDPSDSCKNEVAYTSVYSGIFACAMIVGSMVGSIIAGKCITTFGLKKSFIIVSITCTIACVVVQVAIEYNNYYALCTGRVLIGLGVGILCSVFPMYVNENAHPKLCKMDGVLFQVFTTLGIMLAAMLGLILDKTGASKEEANMAGRLHVFSAVPLGLSVAMFLVGMFLRESTATFAQDDDGKADGGMDPNEYGWGQMLWPLFMGAVTAGTLQLTGINAVMNYAPKITENLGMDPSLGNFLVMAWNFVTSLVAIPLASRFTMRQMFITCSFVASCMCLFLCGIPVFPGVAGKEVKNGVATTGIALFIAAFEFGVGSCFFVLAQDLFPPSFRPKGGSFVVMMQFIFNILINLLYPITTEAISGGATGNQDKGQAVAFILFGLIGLICSVLQFFYLYPYDANQDHENDHGGEPVEQKTYPVEASPRN.

Residues 1-22 (MTERRDNVSHAPDAIEGPNDGA) form a disordered region. The Cytoplasmic portion of the chain corresponds to 1-43 (MTERRDNVSHAPDAIEGPNDGAHAEDTSPGFFSLENLGVAQVQ). The chain crosses the membrane as a helical span at residues 44-64 (VVGGTLNGYVIGYVAVYLLLY). At 65 to 118 (LTATECKFTTEGACGGRKIYGCKWSGTTCKFENPKCSEGSDPSDSCKNEVAYTS) the chain is on the extracellular side. Residues 119-139 (VYSGIFACAMIVGSMVGSIIA) form a helical membrane-spanning segment. Residues 140–151 (GKCITTFGLKKS) lie on the Cytoplasmic side of the membrane. Residues 152–172 (FIIVSITCTIACVVVQVAIEY) form a helical membrane-spanning segment. The Extracellular segment spans residues 173 to 175 (NNY). Residues 176–196 (YALCTGRVLIGLGVGILCSVF) traverse the membrane as a helical segment. Over 197–213 (PMYVNENAHPKLCKMDG) the chain is Cytoplasmic. A helical transmembrane segment spans residues 214-234 (VLFQVFTTLGIMLAAMLGLIL). Residues 235 to 249 (DKTGASKEEANMAGR) lie on the Extracellular side of the membrane. The helical transmembrane segment at 250-270 (LHVFSAVPLGLSVAMFLVGMF) threads the bilayer. Topologically, residues 271–299 (LRESTATFAQDDDGKADGGMDPNEYGWGQ) are cytoplasmic. A helical membrane pass occupies residues 300-320 (MLWPLFMGAVTAGTLQLTGIN). Residues 321 to 338 (AVMNYAPKITENLGMDPS) lie on the Extracellular side of the membrane. Residues 339 to 359 (LGNFLVMAWNFVTSLVAIPLA) traverse the membrane as a helical segment. The Cytoplasmic segment spans residues 360–372 (SRFTMRQMFITCS). A helical membrane pass occupies residues 373-393 (FVASCMCLFLCGIPVFPGVAG). The Extracellular segment spans residues 394–403 (KEVKNGVATT). Residues 404-424 (GIALFIAAFEFGVGSCFFVLA) traverse the membrane as a helical segment. The Cytoplasmic portion of the chain corresponds to 425–436 (QDLFPPSFRPKG). Residues 437-457 (GSFVVMMQFIFNILINLLYPI) traverse the membrane as a helical segment. At 458 to 475 (TTEAISGGATGNQDKGQA) the chain is on the extracellular side. A helical transmembrane segment spans residues 476–496 (VAFILFGLIGLICSVLQFFYL). Residues 497–527 (YPYDANQDHENDHGGEPVEQKTYPVEASPRN) lie on the Cytoplasmic side of the membrane. The span at 506–515 (ENDHGGEPVE) shows a compositional bias: basic and acidic residues. The disordered stretch occupies residues 506–527 (ENDHGGEPVEQKTYPVEASPRN).

It belongs to the major facilitator superfamily. Sugar transporter (TC 2.A.1.1) family.

It is found in the membrane. Facilitative glucose transporter. The chain is Glucose transporter 1B/1C/1D/1F/2B (THT1B) from Trypanosoma brucei brucei.